The following is a 574-amino-acid chain: Regulatory protein NPR4 (574 aa).

Residues M1–N21 form a disordered region. The segment covering S9–S20 has biased composition (low complexity). S11 is modified (phosphoserine). A BTB domain is found at T54 to P130. The C2HC NPR-type zinc-finger motif lies at V133–K147. Residues C136, C141, H143, and C146 each contribute to the Zn(2+) site. ANK repeat units follow at residues E252 to L280, D281 to F311, and R315 to D344. The segment at E373 to P516 is salicylic acid-binding core (SBC). A salicylate-binding site is contributed by R419. The disordered stretch occupies residues P521 to T574. The segment covering R535–A553 has biased composition (basic and acidic residues). Residues R554–R567 are compositionally biased toward low complexity.

It belongs to the plant 'ANKYRIN-BTB/POZ' family. 'NPR1-like' subfamily. As to quaternary structure, forms homodimers, homotetramers and heterodimers with NPR3 in the presence of salicylic acid (SA). Interacts with TGA2, TGA3, TGA5, TGA6 and TGA7. Interacts with CUL3A, a core component of the cullin-RING ubiquitin ligases (CRL). Binds to NPR1; this interaction is disrupted by association with SA, probably due to conformational changes.

The protein localises to the nucleus. It participates in protein modification; protein ubiquitination. In terms of biological role, salicylic acid (SA)-binding substrate-specific adapter of an E3 ubiquitin-protein ligase complex (CUL3-RBX1-BTB) which mediates the ubiquitination and subsequent proteasomal degradation of NPR1 in the absence of SA. Together with NPR3, acts as receptor of salicylic acid to monitor immunity in a NPR1-dependent manner and induce systemic acquired resistance (SAR). Involved in the regulation of basal defense responses against pathogens, and may be implicated in the cross-talk between the SA- and JA-dependent signaling pathways. The sequence is that of Regulatory protein NPR4 from Arabidopsis thaliana (Mouse-ear cress).